The chain runs to 595 residues: Protein kinase C iota type (595 aa).

A compositionally biased stretch (polar residues) spans 1–12 (MPTQRDSSTMSH). Residues 1–21 (MPTQRDSSTMSHTVACGGGGD) are disordered. Pro-2 bears the N-acetylproline mark. The tract at residues 2–28 (PTQRDSSTMSHTVACGGGGDHSHQVRV) is required for interaction with RAB2. The interval 2–252 (PTQRDSSTMS…KASSSLGLQD (251 aa)) is regulatory domain. Thr-3 is subject to Phosphothreonine. 2 positions are modified to phosphoserine: Ser-7 and Ser-8. Thr-9 is subject to Phosphothreonine. The 84-residue stretch at 25–108 (QVRVKAYYRG…SELLIHVFPC (84 aa)) folds into the PB1 domain. The tract at residues 72–91 (DEEGDPCTVSSQLELEEAFR) is interaction with PARD6A. Residues 125–134 (YRRGARRWRK) carry the Pseudosubstrate motif. The Phorbol-ester/DAG-type zinc finger occupies 140–190 (GHTFQAKRFNRRAHCAICTDRIWGLGRQGYKCINCKLLVHKKCHKLVTIEC). A Protein kinase domain is found at 253–521 (FDLLRVIGRG…FADIQGHPFF (269 aa)). 259-267 (IGRGSYAKV) contributes to the ATP binding site. Tyr-264 and Tyr-279 each carry phosphotyrosine; by SRC. Position 282 (Lys-282) interacts with ATP. Tyr-333 is modified (phosphotyrosine; by SRC). Asp-377 serves as the catalytic Proton acceptor. 2 positions are modified to phosphothreonine: Thr-411 and Thr-563. One can recognise an AGC-kinase C-terminal domain in the interval 522–593 (RNVDWDMMEQ…INPLLMSAEE (72 aa)).

Belongs to the protein kinase superfamily. AGC Ser/Thr protein kinase family. PKC subfamily. In terms of assembly, forms a complex with SQSTM1 and MP2K5. Interacts directly with SQSTM1. Interacts with IKBKB. Interacts with PARD6A, PARD6B and PARD6G. Part of a quaternary complex containing aPKC, PARD3, a PARD6 protein (PARD6A, PARD6B or PARD6G) and a GTPase protein (CDC42 or RAC1). Part of a complex with LLGL1 and PARD6B. Interacts with ADAP1/CENTA1. Interaction with SMG1, through the ZN-finger domain, activates the kinase activity. Interacts with CDK7. Forms a complex with RAB2A and GAPDH involved in recruitment onto the membrane of vesicular tubular clusters (VTCs). Interacts with ECT2 ('Thr-359' phosphorylated form). Interacts with VAMP2. Interacts with WDFY2 (via WD repeats 1-3). In terms of processing, phosphorylation at Thr-411 in the activation loop is not mandatory for activation. Upon neuronal growth factor (NGF) stimulation, phosphorylated by SRC at Tyr-264, Tyr-279 and Tyr-333. Phosphorylation on Tyr-264 facilitates binding to KPNB1/importin-beta regulating entry of PRKCI into the nucleus. Phosphorylation on Tyr-333 is important for NF-kappa-B stimulation. Phosphorylated at Thr-563 during the initial phase of long term potentiation.

The protein resides in the cytoplasm. The protein localises to the membrane. Its subcellular location is the endosome. It localises to the nucleus. It carries out the reaction L-seryl-[protein] + ATP = O-phospho-L-seryl-[protein] + ADP + H(+). The enzyme catalyses L-threonyl-[protein] + ATP = O-phospho-L-threonyl-[protein] + ADP + H(+). With respect to regulation, atypical PKCs (PRKCI and PRKCZ) exhibit an elevated basal enzymatic activity (that may be due to the interaction with SMG1 or SQSTM1) and are not regulated by diacylglycerol, phosphatidylserine, phorbol esters or calcium ions. Two specific sites, Thr-411 (activation loop of the kinase domain) and Thr-563 (turn motif), need to be phosphorylated for its full activation. Might also be a target for novel lipid activators that are elevated during nutrient-stimulated insulin secretion. In terms of biological role, calcium- and diacylglycerol-independent serine/ threonine-protein kinase that plays a general protective role against apoptotic stimuli, is involved in NF-kappa-B activation, cell survival, differentiation and polarity, and contributes to the regulation of microtubule dynamics in the early secretory pathway. Is necessary for BCR-ABL oncogene-mediated resistance to apoptotic drug in leukemia cells, protecting leukemia cells against drug-induced apoptosis. In cultured neurons, prevents amyloid beta protein-induced apoptosis by interrupting cell death process at a very early step. In glioblastoma cells, may function downstream of phosphatidylinositol 3-kinase (PI3K) and PDPK1 in the promotion of cell survival by phosphorylating and inhibiting the pro-apoptotic factor BAD. Can form a protein complex in non-small cell lung cancer (NSCLC) cells with PARD6A and ECT2 and regulate ECT2 oncogenic activity by phosphorylation, which in turn promotes transformed growth and invasion. In response to nerve growth factor (NGF), acts downstream of SRC to phosphorylate and activate IRAK1, allowing the subsequent activation of NF-kappa-B and neuronal cell survival. Functions in the organization of the apical domain in epithelial cells by phosphorylating EZR. This step is crucial for activation and normal distribution of EZR at the early stages of intestinal epithelial cell differentiation. Forms a protein complex with LLGL1 and PARD6B independently of PARD3 to regulate epithelial cell polarity. Plays a role in microtubule dynamics in the early secretory pathway through interaction with RAB2A and GAPDH and recruitment to vesicular tubular clusters (VTCs). In human coronary artery endothelial cells (HCAEC), is activated by saturated fatty acids and mediates lipid-induced apoptosis. Downstream of PI3K is required for insulin-stimulated glucose transport. Activates RAB4A and promotes its association with KIF3A which is required for the insulin-induced SLC2A4/GLUT4 translocation in adipocytes. Is essential in early embryogenesis and development of differentiating photoreceptors by playing a role in the establishment of epithelial and neuronal polarity. Involved in early synaptic long term potentiation phase in CA1 hippocampal cells and short term memory formation. The polypeptide is Protein kinase C iota type (Prkci) (Mus musculus (Mouse)).